The sequence spans 110 residues: Large ribosomal subunit protein uL22 (110 aa).

The protein belongs to the universal ribosomal protein uL22 family. Part of the 50S ribosomal subunit.

Its function is as follows. This protein binds specifically to 23S rRNA; its binding is stimulated by other ribosomal proteins, e.g. L4, L17, and L20. It is important during the early stages of 50S assembly. It makes multiple contacts with different domains of the 23S rRNA in the assembled 50S subunit and ribosome. Functionally, the globular domain of the protein is located near the polypeptide exit tunnel on the outside of the subunit, while an extended beta-hairpin is found that lines the wall of the exit tunnel in the center of the 70S ribosome. This Acinetobacter baylyi (strain ATCC 33305 / BD413 / ADP1) protein is Large ribosomal subunit protein uL22.